A 244-amino-acid chain; its full sequence is Phosphoadenosine 5'-phosphosulfate reductase (244 aa).

Cys239 (nucleophile; cysteine thiosulfonate intermediate) is an active-site residue.

This sequence belongs to the PAPS reductase family. CysH subfamily.

The protein resides in the cytoplasm. The enzyme catalyses [thioredoxin]-disulfide + sulfite + adenosine 3',5'-bisphosphate + 2 H(+) = [thioredoxin]-dithiol + 3'-phosphoadenylyl sulfate. It participates in sulfur metabolism; hydrogen sulfide biosynthesis; sulfite from sulfate: step 3/3. Catalyzes the formation of sulfite from phosphoadenosine 5'-phosphosulfate (PAPS) using thioredoxin as an electron donor. This is Phosphoadenosine 5'-phosphosulfate reductase from Shigella boydii serotype 4 (strain Sb227).